The primary structure comprises 241 residues: Phycocyanobilin:ferredoxin oxidoreductase (241 aa).

Belongs to the HY2 family.

The enzyme catalyses (2R,3Z)-phycocyanobilin + 4 oxidized [2Fe-2S]-[ferredoxin] = biliverdin IXalpha + 4 reduced [2Fe-2S]-[ferredoxin] + 4 H(+). Its function is as follows. Catalyzes the four-electron reduction of biliverdin IX-alpha (2-electron reduction at both the A and D rings); the reaction proceeds via an isolatable 2-electron intermediate, 181,182-dihydrobiliverdin. The chain is Phycocyanobilin:ferredoxin oxidoreductase from Prochlorococcus marinus (strain MIT 9515).